The primary structure comprises 236 residues: Ribosomal RNA small subunit methyltransferase G (236 aa).

Residues Gly80, 131–132, and Arg148 contribute to the S-adenosyl-L-methionine site; that span reads AE.

It belongs to the methyltransferase superfamily. RNA methyltransferase RsmG family.

It is found in the cytoplasm. Its function is as follows. Specifically methylates the N7 position of a guanine in 16S rRNA. This Ureaplasma parvum serovar 3 (strain ATCC 27815 / 27 / NCTC 11736) protein is Ribosomal RNA small subunit methyltransferase G.